Here is a 205-residue protein sequence, read N- to C-terminus: Probable thymidylate kinase (205 aa).

10–17 serves as a coordination point for ATP; sequence GIDGSGKT.

Belongs to the thymidylate kinase family.

The enzyme catalyses dTMP + ATP = dTDP + ADP. This Pyrococcus abyssi (strain GE5 / Orsay) protein is Probable thymidylate kinase (tmk).